The sequence spans 571 residues: Urease subunit alpha (571 aa).

In terms of domain architecture, Urease spans 132–571; sequence GGIDAHIHFI…VALAQRYFLF (440 aa). Ni(2+) contacts are provided by His-137, His-139, and Lys-220. The residue at position 220 (Lys-220) is an N6-carboxylysine. His-222 contacts substrate. Ni(2+)-binding residues include His-249 and His-275. The active-site Proton donor is the His-323. Asp-363 contacts Ni(2+).

The protein belongs to the metallo-dependent hydrolases superfamily. Urease alpha subunit family. As to quaternary structure, heterotrimer of UreA (gamma), UreB (beta) and UreC (alpha) subunits. Three heterotrimers associate to form the active enzyme. It depends on Ni cation as a cofactor. In terms of processing, carboxylation allows a single lysine to coordinate two nickel ions.

Its subcellular location is the cytoplasm. It catalyses the reaction urea + 2 H2O + H(+) = hydrogencarbonate + 2 NH4(+). It functions in the pathway nitrogen metabolism; urea degradation; CO(2) and NH(3) from urea (urease route): step 1/1. This chain is Urease subunit alpha, found in Halalkalibacterium halodurans (strain ATCC BAA-125 / DSM 18197 / FERM 7344 / JCM 9153 / C-125) (Bacillus halodurans).